A 156-amino-acid polypeptide reads, in one-letter code: Small ribosomal subunit protein bS6 (156 aa).

The disordered stretch occupies residues Gly98–Lys156. A compositionally biased stretch (basic and acidic residues) spans Glu113–Ser135. Residues Ser137–Ser147 show a composition bias toward low complexity.

The protein belongs to the bacterial ribosomal protein bS6 family.

Functionally, binds together with bS18 to 16S ribosomal RNA. In Mycoplasmopsis synoviae (strain 53) (Mycoplasma synoviae), this protein is Small ribosomal subunit protein bS6.